A 203-amino-acid polypeptide reads, in one-letter code: Translation initiation factor IF-3 (203 aa).

Belongs to the IF-3 family. Monomer.

It is found in the cytoplasm. Functionally, IF-3 binds to the 30S ribosomal subunit and shifts the equilibrium between 70S ribosomes and their 50S and 30S subunits in favor of the free subunits, thus enhancing the availability of 30S subunits on which protein synthesis initiation begins. The polypeptide is Translation initiation factor IF-3 (Corynebacterium efficiens (strain DSM 44549 / YS-314 / AJ 12310 / JCM 11189 / NBRC 100395)).